The primary structure comprises 520 residues: T-box transcription factor TBX22 (520 aa).

A disordered region spans residues 1 to 91 (MALSSRARAF…NSSESLEEKD (91 aa)). Residues 33-49 (PELREKKGGEEEEERRS) show a composition bias toward basic and acidic residues. Residues 67–84 (STSASSGCGSDSGYGNSS) show a composition bias toward low complexity. Positions 96-283 (LQGSELWKRF…RNPFAKGFRD (188 aa)) form a DNA-binding region, T-box.

As to expression, seems to be expressed at a low level.

Its subcellular location is the nucleus. In terms of biological role, probable transcriptional regulator involved in developmental processes. This is major determinant crucial to palatogenesis. The polypeptide is T-box transcription factor TBX22 (TBX22) (Homo sapiens (Human)).